Here is a 65-residue protein sequence, read N- to C-terminus: Beta-mammal toxin Tpa2 (65 aa).

The LCN-type CS-alpha/beta domain occupies 2–64 (KEGYLVGNDG…TWSRATNRCG (63 aa)). 4 disulfide bridges follow: Cys-12-Cys-63, Cys-16-Cys-38, Cys-24-Cys-44, and Cys-28-Cys-46.

In terms of tissue distribution, expressed by the venom gland.

The protein resides in the secreted. In terms of biological role, beta toxins bind voltage-independently at site-4 of sodium channels (Nav) and shift the voltage of activation toward more negative potentials thereby affecting sodium channel activation and promoting spontaneous and repetitive firing. This toxin is lethal to mice. This Tityus pachyurus (Colombian scorpion) protein is Beta-mammal toxin Tpa2.